A 298-amino-acid chain; its full sequence is Bifunctional protein FolD (298 aa).

NADP(+)-binding positions include 167 to 169, S192, and V233; that span reads GRS.

Belongs to the tetrahydrofolate dehydrogenase/cyclohydrolase family. Homodimer.

The catalysed reaction is (6R)-5,10-methylene-5,6,7,8-tetrahydrofolate + NADP(+) = (6R)-5,10-methenyltetrahydrofolate + NADPH. It carries out the reaction (6R)-5,10-methenyltetrahydrofolate + H2O = (6R)-10-formyltetrahydrofolate + H(+). Its pathway is one-carbon metabolism; tetrahydrofolate interconversion. Its function is as follows. Catalyzes the oxidation of 5,10-methylenetetrahydrofolate to 5,10-methenyltetrahydrofolate and then the hydrolysis of 5,10-methenyltetrahydrofolate to 10-formyltetrahydrofolate. The protein is Bifunctional protein FolD of Chelativorans sp. (strain BNC1).